Here is a 220-residue protein sequence, read N- to C-terminus: MKLNKYIDHTLLKQDAKKKQIDSLLSEAREYDFASVCVNPTWVEHAKKGLEGTDAKVCTVVGFPLGATTSAVKAFETKEAIQNGADEIDMVINVGALKSGNLALVESDIRAVVEASGDKLVKVIIEACLLTDQEKIVVCQLAQKAGADFVKTSTGFSTGGATIADVRLMCETVGSDMGVKAAGGARSYADALAFVEAGATRIGTSAGVAILKGELADGDY.

Asp89 acts as the Proton donor/acceptor in catalysis. The active-site Schiff-base intermediate with acetaldehyde is the Lys151. Lys180 (proton donor/acceptor) is an active-site residue.

Belongs to the DeoC/FbaB aldolase family. DeoC type 1 subfamily.

It is found in the cytoplasm. The enzyme catalyses 2-deoxy-D-ribose 5-phosphate = D-glyceraldehyde 3-phosphate + acetaldehyde. The protein operates within carbohydrate degradation; 2-deoxy-D-ribose 1-phosphate degradation; D-glyceraldehyde 3-phosphate and acetaldehyde from 2-deoxy-alpha-D-ribose 1-phosphate: step 2/2. Functionally, catalyzes a reversible aldol reaction between acetaldehyde and D-glyceraldehyde 3-phosphate to generate 2-deoxy-D-ribose 5-phosphate. The chain is Deoxyribose-phosphate aldolase from Streptococcus pneumoniae (strain Hungary19A-6).